The chain runs to 663 residues: DNA ligase (663 aa).

Residues 33 to 37, 82 to 83, and E112 each bind NAD(+); these read DYSYD and SI. Residue K114 is the N6-AMP-lysine intermediate of the active site. The NAD(+) site is built by R135, E171, K285, and K309. Residues C403, C406, C419, and C424 each coordinate Zn(2+). The BRCT domain maps to 581–663; sequence DKEAPLQGKV…SRILDAKSVS (83 aa).

The protein belongs to the NAD-dependent DNA ligase family. LigA subfamily. Mg(2+) is required as a cofactor. It depends on Mn(2+) as a cofactor.

It carries out the reaction NAD(+) + (deoxyribonucleotide)n-3'-hydroxyl + 5'-phospho-(deoxyribonucleotide)m = (deoxyribonucleotide)n+m + AMP + beta-nicotinamide D-nucleotide.. DNA ligase that catalyzes the formation of phosphodiester linkages between 5'-phosphoryl and 3'-hydroxyl groups in double-stranded DNA using NAD as a coenzyme and as the energy source for the reaction. It is essential for DNA replication and repair of damaged DNA. This is DNA ligase from Chlamydia trachomatis serovar L2 (strain ATCC VR-902B / DSM 19102 / 434/Bu).